We begin with the raw amino-acid sequence, 310 residues long: UDP-N-acetylenolpyruvoylglucosamine reductase (310 aa).

The region spanning 35–199 (VGGPAQALFT…TSARFRGTPA (165 aa)) is the FAD-binding PCMH-type domain. Arg179 is an active-site residue. Ser228 functions as the Proton donor in the catalytic mechanism. Residue Glu298 is part of the active site.

Belongs to the MurB family. Requires FAD as cofactor.

Its subcellular location is the cytoplasm. The enzyme catalyses UDP-N-acetyl-alpha-D-muramate + NADP(+) = UDP-N-acetyl-3-O-(1-carboxyvinyl)-alpha-D-glucosamine + NADPH + H(+). It participates in cell wall biogenesis; peptidoglycan biosynthesis. Its function is as follows. Cell wall formation. This Rhodopseudomonas palustris (strain BisB5) protein is UDP-N-acetylenolpyruvoylglucosamine reductase.